A 312-amino-acid chain; its full sequence is Malate dehydrogenase (312 aa).

Residues 7-13 and D34 contribute to the NAD(+) site; that span reads GAAGGIG. The substrate site is built by R81 and R87. NAD(+)-binding positions include N94 and 117–119; that span reads ITN. Residues N119 and R153 each coordinate substrate. H177 functions as the Proton acceptor in the catalytic mechanism. M227 lines the NAD(+) pocket.

This sequence belongs to the LDH/MDH superfamily. MDH type 1 family. As to quaternary structure, homodimer.

The enzyme catalyses (S)-malate + NAD(+) = oxaloacetate + NADH + H(+). Catalyzes the reversible oxidation of malate to oxaloacetate. This chain is Malate dehydrogenase, found in Salmonella choleraesuis (strain SC-B67).